We begin with the raw amino-acid sequence, 57 residues long: Benzylsuccinate synthase gamma subunit (57 aa).

As to quaternary structure, heterohexamer composed of 2 alpha subunits, 2 beta subunits and 2 gamma subunits.

The catalysed reaction is toluene + fumarate = 2-benzylsuccinate. Its pathway is xenobiotic degradation; toluene degradation. With respect to regulation, activated by the benzylsuccinate synthase activating enzyme BssD. Rapidly inactivated by oxygen. Functionally, catalyzes the addition of fumarate to the methyl group of toluene, leading to the formation of benzylsuccinate. This chain is Benzylsuccinate synthase gamma subunit (bssC), found in Thauera aromatica.